Reading from the N-terminus, the 133-residue chain is Large ribosomal subunit protein uL22 (133 aa).

The protein belongs to the universal ribosomal protein uL22 family. In terms of assembly, part of the 50S ribosomal subunit.

This protein binds specifically to 23S rRNA; its binding is stimulated by other ribosomal proteins, e.g. L4, L17, and L20. It is important during the early stages of 50S assembly. It makes multiple contacts with different domains of the 23S rRNA in the assembled 50S subunit and ribosome. Functionally, the globular domain of the protein is located near the polypeptide exit tunnel on the outside of the subunit, while an extended beta-hairpin is found that lines the wall of the exit tunnel in the center of the 70S ribosome. In Borrelia garinii subsp. bavariensis (strain ATCC BAA-2496 / DSM 23469 / PBi) (Borreliella bavariensis), this protein is Large ribosomal subunit protein uL22.